The primary structure comprises 104 residues: SOSS complex subunit C (104 aa).

The protein belongs to the SOSS-C family. Belongs to the multiprotein complex Integrator. Component of the SOSS complex, composed of SOSS-B (SOSS-B1/NABP2 or SOSS-B2/NABP1), SOSS-A/INTS3 and SOSS-C/INIP.

It is found in the nucleus. Its function is as follows. Component of the SOSS complex, a multiprotein complex that functions downstream of the MRN complex to promote DNA repair and G2/M checkpoint. The SOSS complex associates with single-stranded DNA at DNA lesions and influences diverse endpoints in the cellular DNA damage response including cell-cycle checkpoint activation, recombinational repair and maintenance of genomic stability. Required for efficient homologous recombination-dependent repair of double-strand breaks (DSBs). The protein is SOSS complex subunit C (INIP) of Taeniopygia guttata (Zebra finch).